We begin with the raw amino-acid sequence, 326 residues long: tRNA dimethylallyltransferase (326 aa).

Residue glycine 10–threonine 17 coordinates ATP. Residue threonine 12–threonine 17 coordinates substrate. The interval aspartate 35 to glutamine 38 is interaction with substrate tRNA.

Belongs to the IPP transferase family. Monomer. It depends on Mg(2+) as a cofactor.

The catalysed reaction is adenosine(37) in tRNA + dimethylallyl diphosphate = N(6)-dimethylallyladenosine(37) in tRNA + diphosphate. Catalyzes the transfer of a dimethylallyl group onto the adenine at position 37 in tRNAs that read codons beginning with uridine, leading to the formation of N6-(dimethylallyl)adenosine (i(6)A). The polypeptide is tRNA dimethylallyltransferase (Dictyoglomus turgidum (strain DSM 6724 / Z-1310)).